Reading from the N-terminus, the 229-residue chain is UPF0173 metal-dependent hydrolase SAB1566c (229 aa).

It belongs to the UPF0173 family.

The sequence is that of UPF0173 metal-dependent hydrolase SAB1566c from Staphylococcus aureus (strain bovine RF122 / ET3-1).